Here is a 435-residue protein sequence, read N- to C-terminus: BAHD acyltransferase BIA1 (435 aa).

Active-site proton acceptor residues include histidine 151 and aspartate 369.

It belongs to the plant acyltransferase family. Mostly expressed in roots (particularly in the root elongation zone), and, to a lower extent, in seedling, leaves (especially in hydathodes), siliques (e.g. in developing seeds) and flowers.

It is found in the cytoplasm. Functionally, monitors brassinosteroids (BR) responses and homeostasis, particularly in the root and hypocotyl in darkness. Promotes flavonoid biosynthesis. In Arabidopsis thaliana (Mouse-ear cress), this protein is BAHD acyltransferase BIA1.